We begin with the raw amino-acid sequence, 92 residues long: DNA/RNA-binding protein Alba (92 aa).

Lysine 11 is modified (N6-acetyllysine).

Belongs to the histone-like Alba family. In terms of processing, acetylated. Acetylation at Lys-11 decreases DNA-binding affinity.

Its subcellular location is the cytoplasm. It localises to the chromosome. In terms of biological role, binds double-stranded DNA tightly but without sequence specificity. Involved in DNA compaction. This chain is DNA/RNA-binding protein Alba, found in Pyrobaculum calidifontis (strain DSM 21063 / JCM 11548 / VA1).